The chain runs to 462 residues: MGKEKTHINIVVIGHVDSGKSTTTGHLIYKCGGIDKRTIEKFEKEAAEMGKGSFKYAWVLDKLKAERERGITIDISLWKFETSKYYVTIIDAPGHRDFIKNMITGTSQADCAVLIVAAGVGEFEAGISKNGQTREHALLAYTLGVKQLIVGVNKMDSTEPPYSQKRYEEIVKEVSTYIKKIGYNPDTVAFVPISGWNGDNMLEPSANMPWFKGWKVTRKDGNASGTTLLEALDCILPPTRPTDKPLRLPLQDVYKIGGIGTVPVGRVETGVLKPGMVVTFAPVNVTTEVKSVEMHHEALSEALPGDNVGFNVKNVSVKDVRRGNVAGDSKNDPPMEAAGFTAQVIILNHPGQISAGYAPVPDCHTAHIACKFAELKEKIDRRSGKKLEDGPKFLKSGDAAIVDMVPGKPMCVESFSDYPPLGRFAVRDMRQTVAVGVIKAVDKKAAGAGKVTKSAQKAQKAK.

Glycine 2 carries the post-translational modification N,N,N-trimethylglycine. A tr-type G domain is found at lysine 5–threonine 242. A G1 region spans residues glycine 14 to serine 21. Glycine 14–serine 21 is a binding site for GTP. Lysine 36 bears the N6,N6,N6-trimethyllysine; alternate mark. An N6,N6-dimethyllysine; alternate modification is found at lysine 36. Lysine 36 is modified (N6-methyllysine; alternate). Lysine 55 is subject to N6,N6-dimethyllysine. The segment at glycine 70–aspartate 74 is G2. Lysine 79 carries the post-translational modification N6,N6,N6-trimethyllysine; by EEF1AKMT1. Residues aspartate 91–glycine 94 are G3. Asparagine 153–aspartate 156 provides a ligand contact to GTP. A G4 region spans residues asparagine 153–aspartate 156. The residue at position 165 (lysine 165) is an N6,N6,N6-trimethyllysine; alternate; by EEF1AKMT3. Position 165 is an N6,N6-dimethyllysine; alternate; by EEF1AKMT3 (lysine 165). Lysine 165 carries the N6-acetyllysine; alternate modification. N6-methyllysine; alternate; by EEF1AKMT3 is present on lysine 165. Lysine 172 is subject to N6-acetyllysine. Serine 194 to tryptophan 196 contacts GTP. The G5 stretch occupies residues serine 194–tryptophan 196. At lysine 273 the chain carries N6-acetyllysine. Serine 300 is subject to Phosphoserine; by TGFBR1. Glutamate 301 bears the 5-glutamyl glycerylphosphorylethanolamine mark. Lysine 318 bears the N6,N6,N6-trimethyllysine; by EEF1AKMT2 mark. Position 374 is a 5-glutamyl glycerylphosphorylethanolamine (glutamate 374). Residue lysine 385 forms a Glycyl lysine isopeptide (Lys-Gly) (interchain with G-Cter in ubiquitin) linkage. At lysine 392 the chain carries N6-acetyllysine; alternate. Residue lysine 392 is modified to N6-succinyllysine; alternate. Threonine 432 bears the Phosphothreonine; by PASK mark. Lysine 439 carries the N6-acetyllysine modification.

The protein belongs to the TRAFAC class translation factor GTPase superfamily. Classic translation factor GTPase family. EF-Tu/EF-1A subfamily. In terms of assembly, found in a nuclear export complex with XPO5, EEF1A1, Ran and aminoacylated tRNA. Interacts with PARP1 and TXK. Interacts with KARS1. May interact with ERGIC2. Interacts with IFIT1 (via TPR repeats 4-7). Interacts with DLC1, facilitating distribution to the membrane periphery and ruffles upon growth factor stimulation. Interacts with ZPR1; the interaction occurs in a epidermal growth factor (EGF)-dependent manner. Interacts with PPP1R16B. Interacts with SPHK1 and SPHK2; both interactions increase SPHK1 and SPHK2 kinase activity. Interacts with guanyl-nucleotide exchange factor EEF1B2. Interacts (via middle-region) with HTATIP2 (via N-terminus); the interaction is direct and competes with EEF1A1 binding to guanyl-nucleotide exchange factor EEF1B2, thereby inhibiting GDP for GTP exchange and reactivation of EEF1A1. Interacts with tRNA. ISGylated. Post-translationally, phosphorylated by TXK. Phosphorylation by PASK increases translation efficiency. Phosphorylated by ROCK2. Phosphorylation by TGFBR1 inhibits translation elongation. In terms of processing, trimethylated at Lys-79 by EEF1AKMT1. Methylated at Lys-165 by EEF1AKMT3, methylation by EEF1AKMT3 is dynamic as well as inducible by stress conditions, such as ER-stress, and plays a regulatory role on mRNA translation. Trimethylated at Lys-318 by EEF1AKMT2. Mono-, di-, and trimethylated at Lys-36 by EEF1AKMT4; trimethylated form is predominant. Methylation by EEF1AKMT4 contributes to the fine-tuning of translation rates for a subset of tRNAs. Trimethylated at Gly-2 by METTL13. Mono- and dimethylated at Lys-55 by METTL13; dimethylated form is predominant. Ubiquitinated at Lys-385 by RNF14 in response to ribosome collisions (ribosome stalling), leading to its degradation by the proteasome and rescue of stalled ribosomes.

It is found in the cytoplasm. The protein localises to the nucleus. Its subcellular location is the nucleolus. The protein resides in the cell membrane. The catalysed reaction is GTP + H2O = GDP + phosphate + H(+). Translation elongation factor that catalyzes the GTP-dependent binding of aminoacyl-tRNA (aa-tRNA) to the A-site of ribosomes during the elongation phase of protein synthesis. Base pairing between the mRNA codon and the aa-tRNA anticodon promotes GTP hydrolysis, releasing the aa-tRNA from EEF1A1 and allowing its accommodation into the ribosome. The growing protein chain is subsequently transferred from the P-site peptidyl tRNA to the A-site aa-tRNA, extending it by one amino acid through ribosome-catalyzed peptide bond formation. Also plays a role in the positive regulation of IFNG transcription in T-helper 1 cells as part of an IFNG promoter-binding complex with TXK and PARP1. Also plays a role in cytoskeleton organization by promoting actin bundling. The chain is Elongation factor 1-alpha 1 (EEF1A1) from Equus caballus (Horse).